We begin with the raw amino-acid sequence, 422 residues long: GTPase Obg (422 aa).

Residues 4 to 161 form the Obg domain; it reads LHFVDEAFNE…FKIKTELKVL (158 aa). Residues 162–327 enclose the OBG-type G domain; sequence ADIGLLGFPS…LKYEMSSLLQ (166 aa). GTP contacts are provided by residues 168–175, 193–197, 214–217, 281–284, and 308–310; these read GFPSVGKS, FTTIK, DLPG, NKMD, and SLV. The Mg(2+) site is built by serine 175 and threonine 195. Residues 345–422 form the OCT domain; the sequence is TLPDNQNTIS…KICDRLFYFL (78 aa).

It belongs to the TRAFAC class OBG-HflX-like GTPase superfamily. OBG GTPase family. In terms of assembly, monomer. Requires Mg(2+) as cofactor.

The protein localises to the cytoplasm. Functionally, an essential GTPase which binds GTP, GDP and possibly (p)ppGpp with moderate affinity, with high nucleotide exchange rates and a fairly low GTP hydrolysis rate. Plays a role in control of the cell cycle, stress response, ribosome biogenesis and in those bacteria that undergo differentiation, in morphogenesis control. The chain is GTPase Obg from Onion yellows phytoplasma (strain OY-M).